A 64-amino-acid polypeptide reads, in one-letter code: Translation machinery-associated protein 7 (64 aa).

Residues 1 to 64 (MSGREGGKKK…GGGIKKSGKK (64 aa)) are disordered. Residues 21–50 (EMDEDEMAFKQKQKEDQKAMEQLKAKAAGK) adopt a coiled-coil conformation. Over residues 27 to 44 (MAFKQKQKEDQKAMEQLK) the composition is skewed to basic and acidic residues. Over residues 52–64 (PLTGGGIKKSGKK) the composition is skewed to gly residues.

Belongs to the TMA7 family.

This chain is Translation machinery-associated protein 7 (tma7), found in Danio rerio (Zebrafish).